Here is a 491-residue protein sequence, read N- to C-terminus: Nicotinamide phosphoribosyltransferase (491 aa).

Position 1 is an N-acetylmethionine (Met1). Tyr188 bears the Phosphotyrosine mark. Arg196 is a diphosphate binding site. Asp219 lines the beta-nicotinamide D-ribonucleotide pocket. Positions 247 and 311 each coordinate diphosphate. Beta-nicotinamide D-ribonucleotide-binding positions include 311–313 (RPD), 353–354 (GD), Gly384, and Arg392. Ser472 carries the phosphoserine modification.

It belongs to the NAPRTase family. In terms of assembly, homodimer.

The protein localises to the nucleus. It localises to the cytoplasm. It is found in the secreted. It carries out the reaction beta-nicotinamide D-ribonucleotide + diphosphate = 5-phospho-alpha-D-ribose 1-diphosphate + nicotinamide + H(+). Its pathway is cofactor biosynthesis; NAD(+) biosynthesis; nicotinamide D-ribonucleotide from 5-phospho-alpha-D-ribose 1-diphosphate and nicotinamide: step 1/1. In terms of biological role, catalyzes the condensation of nicotinamide with 5-phosphoribosyl-1-pyrophosphate to yield nicotinamide mononucleotide, an intermediate in the biosynthesis of NAD. It is the rate limiting component in the mammalian NAD biosynthesis pathway. The secreted form behaves both as a cytokine with immunomodulating properties and an adipokine with anti-diabetic properties, it has no enzymatic activity, partly because of lack of activation by ATP, which has a low level in extracellular space and plasma. Plays a role in the modulation of circadian clock function. Plays a role in the modulation of circadian clock function. NAMPT-dependent oscillatory production of NAD regulates oscillation of clock target gene expression by releasing the core clock component: CLOCK-BMAL1 heterodimer from NAD-dependent SIRT1-mediated suppression. The chain is Nicotinamide phosphoribosyltransferase (NAMPT) from Sus scrofa (Pig).